The primary structure comprises 503 residues: Transcription termination/antitermination protein NusA (503 aa).

The S1 motif domain maps to 140–206; it reads GELVIGVVKR…RGPQLLVSRT (67 aa). One can recognise a KH domain in the interval 308 to 374; sequence SHTMDIAVNK…FMEKLDVDEE (67 aa).

It belongs to the NusA family. In terms of assembly, monomer. Binds directly to the core enzyme of the DNA-dependent RNA polymerase and to nascent RNA.

It is found in the cytoplasm. Participates in both transcription termination and antitermination. This is Transcription termination/antitermination protein NusA from Coxiella burnetii (strain RSA 493 / Nine Mile phase I).